The following is a 401-amino-acid chain: Mannonate dehydratase (401 aa).

Belongs to the mannonate dehydratase family. Requires Fe(2+) as cofactor. The cofactor is Mn(2+).

It catalyses the reaction D-mannonate = 2-dehydro-3-deoxy-D-gluconate + H2O. It participates in carbohydrate metabolism; pentose and glucuronate interconversion. In terms of biological role, catalyzes the dehydration of D-mannonate. This is Mannonate dehydratase from Brucella melitensis biotype 2 (strain ATCC 23457).